A 287-amino-acid polypeptide reads, in one-letter code: Probable F-box protein At5g04010 (287 aa).

An F-box; degenerate domain is found at 50–101 (PSPPSWEILCLVGPYMDPESLAVASCVSTTWSKCFSSEDLWKSLPATRHSIF).

The protein is Probable F-box protein At5g04010 (NSFBx) of Arabidopsis thaliana (Mouse-ear cress).